Consider the following 877-residue polypeptide: Leucine--tRNA ligase (877 aa).

The 'HIGH' region signature appears at Pro48–His58. Residues Lys636 to Ser640 carry the 'KMSKS' region motif. Lys639 serves as a coordination point for ATP.

It belongs to the class-I aminoacyl-tRNA synthetase family.

It localises to the cytoplasm. It carries out the reaction tRNA(Leu) + L-leucine + ATP = L-leucyl-tRNA(Leu) + AMP + diphosphate. This chain is Leucine--tRNA ligase, found in Ralstonia pickettii (strain 12J).